A 161-amino-acid chain; its full sequence is Allophycocyanin beta chain (161 aa).

The residue at position 71 (asparagine 71) is an N4-methylasparagine. Cysteine 81 is a (2R,3E)-phycocyanobilin binding site.

The protein belongs to the phycobiliprotein family. As to quaternary structure, heterodimer of an alpha and a beta chain. Post-translationally, contains one covalently linked phycocyanobilin chromophore.

It localises to the plastid. The protein localises to the chloroplast thylakoid membrane. Light-harvesting photosynthetic bile pigment-protein from the phycobiliprotein complex. Allophycocyanin has a maximum absorption at approximately 650 nanometers. This chain is Allophycocyanin beta chain (apcB), found in Pyropia haitanensis (Red seaweed).